A 437-amino-acid polypeptide reads, in one-letter code: Sodium/bile acid cotransporter 4 (437 aa).

The Extracellular portion of the chain corresponds to 1–103 (MDGLDNTTRL…PPFWDTPLNH (103 aa)). 3 N-linked (GlcNAc...) asparagine glycosylation sites follow: Asn6, Asn20, and Asn26. Residues 16–84 (LLPDNLTLSP…GGVAGQDSST (69 aa)) form a disordered region. Positions 21-50 (LTLSPNASSTSASTLSPLPVTSSPSPGLSL) are enriched in low complexity. The chain crosses the membrane as a helical span at residues 104 to 124 (GLNVFVGAALCITMLGLGCTV). At 125–140 (DVNHFGAHVRRPVGAL) the chain is on the cytoplasmic side. A helical membrane pass occupies residues 141 to 161 (LAALCQFGFLPLLAFLLALAF). At 162 to 197 (KLDEVAAVAVLLCGCCPGGNLSNLMSLLVDGDMNLS) the chain is on the extracellular side. N-linked (GlcNAc...) asparagine glycans are attached at residues Asn181 and Asn195. A helical membrane pass occupies residues 198–218 (IIMTISSTLLALVLMPLCLWI). Residues 219 to 233 (YSRAWINTPLVQLLP) lie on the Cytoplasmic side of the membrane. The chain crosses the membrane as a helical span at residues 234 to 254 (LGAVTLTLCSTLIPIGLGVFI). The Extracellular segment spans residues 255–267 (RYKYNRVADYIVK). The chain crosses the membrane as a helical span at residues 268-288 (VSLCSLLVTLVVLFIMTGTML). Topologically, residues 289–291 (GPE) are cytoplasmic. A helical transmembrane segment spans residues 292 to 312 (LLASIPAAVYVVAIFMPLAGY). The Extracellular portion of the chain corresponds to 313–360 (ASGYGLATLFHLPPNCKRTVCLETGSQNVQLCTAILKLAFPPRFIGSM). A helical membrane pass occupies residues 361-381 (YMFPLLYALFQSAEAGVFVLI). The Cytoplasmic segment spans residues 382 to 437 (YKMYGSEILHKREALDEDDDTDISYKKLKEEELADTSYGTVGTDDLVLMETTQTSL).

This sequence belongs to the bile acid:sodium symporter (BASS) (TC 2.A.28) family. In terms of processing, activated following N-terminal proteolytic cleavage by thrombin and/or proteases. In terms of tissue distribution, mainly expressed in the central nervous system cholinergic neurons. Expressed (at protein level) in motor regions of the spinal cord and rhombencephalon, in mesopontine cholinergic neurons, the medial habenula, cholinergic areas of the forebrain, and the gut myenteric plexus.

Its subcellular location is the cell membrane. Functionally, transporter for bile acids. This is Sodium/bile acid cotransporter 4 (Slc10a4) from Rattus norvegicus (Rat).